A 570-amino-acid polypeptide reads, in one-letter code: MFS-type transporter ptmT (570 aa).

A compositionally biased stretch (polar residues) spans 1 to 11 (MPDSGNIQLDT). A disordered region spans residues 1–34 (MPDSGNIQLDTLQHKDHSQETTSHYEGGSQLPEQ). 14 helical membrane-spanning segments follow: residues 50–70 (GLIR…CVGL), 94–114 (WYVS…GKIY), 121–141 (WTYL…AITP), 151–171 (AISG…LSNI), 182–202 (AFIG…GGVF), 210–230 (WCFY…FLFM), 247–267 (GLDW…LLAL), 278–298 (NVRI…WLLI), 323–343 (IYTI…PIWF), 356–376 (IMNL…SVLI), 379–399 (VGYM…GAGL), 413–433 (IGYQ…PLLV), 445–465 (VATA…SAIA), and 517–537 (VTHT…GAFI). N-linked (GlcNAc...) asparagine glycosylation is present at Asn-541. Residues 550-570 (PEPLVPGGSHSGAERDSKNGT) are disordered. A compositionally biased stretch (basic and acidic residues) spans 561 to 570 (GAERDSKNGT).

The protein belongs to the major facilitator superfamily. TCR/Tet family.

The protein resides in the cell membrane. Its function is as follows. MFS-type transporter; part of the gene cluster that mediates the biosynthesis of the indole diterpenes penitrems. May be involved in the efflux of penitrems. The chain is MFS-type transporter ptmT from Penicillium ochrochloron.